A 709-amino-acid polypeptide reads, in one-letter code: Protein IMPAIRED IN BABA-INDUCED STERILITY 1 (709 aa).

A lipid anchor (N-myristoyl glycine) is attached at Gly2. Residues 53–80 (SGKKSSSKKSGSELGSDFGELSESGRAS) are disordered. A Protein kinase domain is found at 131-418 (FEKLEKIGQG…ASTALVSQYF (288 aa)). Residues 137 to 145 (IGQGTYSSV) and Lys160 each bind ATP. Asp255 acts as the Proton acceptor in catalysis. Disordered regions lie at residues 434 to 536 (SPSK…PFSG) and 566 to 609 (SRGH…QDRE). Positions 437–449 (KEIDAKHREDTTR) are enriched in basic and acidic residues. Residues 484–494 (HSQKFQKRNGH) are compositionally biased toward basic residues. The segment covering 495-505 (SVHNSIDSDST) has biased composition (polar residues). Composition is skewed to basic and acidic residues over residues 509 to 523 (KMQK…EASH) and 586 to 609 (VDSK…QDRE).

This sequence belongs to the protein kinase superfamily. Ser/Thr protein kinase family.

Its function is as follows. Required for beta-aminobutyric acid (BABA)-induced resistance (BABA-IR) against bacteria (e.g. P.syringae) and oomycetes (e.g. H.parasitica) via priming for salicylate (SA)-dependent defense responses such as pathogenesis-related PR-1 gene expression and trailing necrosis. Involved in BABA-mediated sterility. Necessary for the inheritance of BABA-priming to next generation, especially for the primed to be primed phenotype which consists in an enhanced second BABA-priming in transgenerationally primed plants. In Arabidopsis thaliana (Mouse-ear cress), this protein is Protein IMPAIRED IN BABA-INDUCED STERILITY 1.